Consider the following 2812-residue polypeptide: Zonadhesin (2812 aa).

Positions 1-17 are cleaved as a signal peptide; the sequence is MVPPVWTLLLLVGAALF. Residues 18-2757 are Extracellular-facing; the sequence is RKEKPPDQKL…DAPPPRKPAS (2740 aa). MAM domains are found at residues 39–204, 209–368, and 371–536; these read TQCD…SCNR, QTCS…PCGE, and PQCD…TCPV. A disordered region spans residues 61–84; that stretch reads EDWVRASGPSPTGSTGAPGGYPNG. A compositionally biased stretch (low complexity) spans 66 to 75; sequence ASGPSPTGST. N-linked (GlcNAc...) asparagine glycosylation is found at N333 and N493. Disordered stretches follow at residues 545 to 884 and 904 to 929; these read VSPV…PTEK and EKPT…KPTI. A compositionally biased stretch (low complexity) spans 547-558; sequence PVSSTGPSETTG. The span at 559–570 shows a compositional bias: polar residues; the sequence is LTENPTISTKKP. The interval 573-1041 is 66 X heptapeptide repeats (approximate) (mucin-like domain); it reads SIEKPSVTTE…GTTTTSRSST (469 aa). 5 stretches are compositionally biased toward low complexity: residues 592-603, 651-675, 713-842, 853-868, and 916-929; these read TIPTEKPTISTE, TEKP…MEEP, SPEK…STEK, STEK…TISP, and STEK…KPTI. The TIL 1 domain maps to 1044–1093; sequence CPPNARYESCACPASCKSPRPSCGPLCREGCVCNPGFLFSDNHCIQASSC. Residues 1103–1148 form the VWFC 1 domain; it reads EPGAEWFSPNCTEHCRCWPGSRVECQISQCGTHTVCQLKNGQYGCH. N-linked (GlcNAc...) asparagine glycosylation is found at N1112 and N1188. The 178-residue stretch at 1154–1331 folds into the VWFD 1 domain; the sequence is ATCLVYGDPH…TDQDEDQECQ (178 aa). 2 disulfide bridges follow: C1156/C1291 and C1178/C1330. The span at 1302–1316 shows a compositional bias: basic and acidic residues; sequence HLKLDGSPAGDKEEL. The interval 1302–1323 is disordered; that stretch reads HLKLDGSPAGDKEELGNSWQTD. The TIL 2 domain occupies 1426–1479; that stretch reads CPPNSKYSLCAKPCPDTCHSGFSGMFCSDRCVEACECNPGFVLSGLECIPRSQC. A VWFC 2 domain is found at 1480–1535; sequence GCLHPAGSYFKVGERWYKPGCKELCVCESNNRIRCQPWRCRAQEFCGQQDGIYGCH. One can recognise a VWFD 2 domain in the interval 1540–1720; sequence ATCTASGDPH…LPESSEPGCF (181 aa). Cystine bridges form between C1542-C1680 and C1564-C1719. 2 N-linked (GlcNAc...) asparagine glycosylation sites follow: N1685 and N1804. The TIL 3 domain maps to 1812–1867; sequence CPPGSSYSPCSSPCPDTCSSINNPRDCPKALPCAESCECQKGHILSGTSCVPLGQC. In terms of domain architecture, VWFC 3 spans 1868–1924; it reads GCTDPAGSYHPVGERWYTENTCTRLCTCSVHNNITCFQSTCKPNQICWALDGLLHCR. N1900 and N1946 each carry an N-linked (GlcNAc...) asparagine glycan. The region spanning 1929-2108 is the VWFD 3 domain; it reads GVCQLPGESH…KDKDIDPSCQ (180 aa). Disulfide bonds link C1931–C2069 and C1953–C2107. N2203 carries an N-linked (GlcNAc...) asparagine glycan. In terms of domain architecture, TIL 4 spans 2211-2267; that stretch reads CPAYSSYTNCLPSCSPSCWDLDGRCEGAKVPSACAEGCICQPGYVLSEDKCVPRSQC. In terms of domain architecture, VWFC 4 spans 2268–2329; the sequence is GCKDAHGGSI…NSNCVSDKSE (62 aa). The VWFD 4 domain maps to 2329–2505; that stretch reads EQCSVYGDPR…SWEVKTEDAL (177 aa). A disulfide bridge connects residues C2331 and C2468. N2542 and N2701 each carry an N-linked (GlcNAc...) asparagine glycan. One can recognise a VWFC 5 domain in the interval 2652–2797; it reads CGCTSNGIYY…KREKTQEGDR (146 aa). Positions 2708–2744 constitute an EGF-like domain; sequence PESPCLQNPCQNDGQCREQGATFTCECEVGYGGGLCM. 3 disulfide bridges follow: C2712–C2723, C2717–C2732, and C2734–C2743. A helical transmembrane segment spans residues 2758 to 2778; it reads NLVGVLLGLLVPVVVVLLAVT. The Cytoplasmic segment spans residues 2779 to 2812; that stretch reads RECIYRTRRKREKTQEGDRLARLVDTDTVLDCAC.

As to quaternary structure, probably forms covalent oligomers. In terms of tissue distribution, in testis, primarily in haploid spermatids.

The protein resides in the cell membrane. In terms of biological role, binds in a species-specific manner to the zona pellucida of the egg. May be involved in gamete recognition and/or signaling. The chain is Zonadhesin (ZAN) from Homo sapiens (Human).